We begin with the raw amino-acid sequence, 573 residues long: Protein FAM200A (573 aa).

The segment at 1–51 is disordered; sequence MTPESRDTTDLSPRGTQEMEGIVVVKVEEEDEEDHFQKQRNKVESSPQVLS. Over 1–513 the chain is Extracellular; it reads MTPESRDTTD…DEFPLLSRKS (513 aa). A helical membrane pass occupies residues 514-533; that stretch reads ISLLLPFTTTYLCELGFSIL. Topologically, residues 534–573 are cytoplasmic; sequence TRLKTKKRNRLNSAPDMRVALSSCVPDWKELMNRQAHPSH.

It belongs to the FAM200 family.

It localises to the membrane. The polypeptide is Protein FAM200A (FAM200A) (Macaca fascicularis (Crab-eating macaque)).